The following is a 298-amino-acid chain: Lysozyme-like protein 1 (298 aa).

Residues 1–16 (MLKLAFVTFLFALASA) form the signal peptide. The 219-residue stretch at 59-277 (YAYAVDISVP…AAASSKNTDF (219 aa)) folds into the Ch-type lysozyme domain.

This sequence belongs to the glycosyl hydrolase 25 family. In terms of tissue distribution, expressed in intestine, IL2 and IL6 neurons and some neurons in the head ganglia.

It is found in the cytoplasmic vesicle lumen. In terms of biological role, involved in resistance to Gram-negative bacterium S.marcescens and to bacterium Gram-positive S.aureus infection. The chain is Lysozyme-like protein 1 from Caenorhabditis elegans.